Consider the following 1367-residue polypeptide: Phospholipid-transporting ATPase C4F10.16c (1367 aa).

Topologically, residues 1–154 (MPSLINFDAI…PKNLWNQFKN (154 aa)) are cytoplasmic. Residues 34–104 (HNGSLAHEGP…KKNEAGTESG (71 aa)) are disordered. Residues 50–70 (SSRHHESQFSQEAHAEQRSRD) show a composition bias toward basic and acidic residues. Over residues 77–92 (FEGSCNNSDQSWTSRV) the composition is skewed to polar residues. Residues 155-172 (IANAFFLFVTLLQCIPLF) form a helical membrane-spanning segment. Residues 173-177 (CPEHL) lie on the Lumenal side of the membrane. The chain crosses the membrane as a helical span at residues 178–197 (GLSFIPLSVILLTTAIKDGI). At 198-482 (EDYRRCVLDK…PSKRSRITRD (285 aa)) the chain is on the cytoplasmic side. Residues 483-503 (LNWTIILNFLLLFAMCLFSGV) traverse the membrane as a helical segment. Over 504–531 (LRSIYSAQNNSARVFELSKNSNTAPAHG) the chain is Lumenal. A helical transmembrane segment spans residues 532-552 (IISIFTSLILFQNLVPISLYI). The Cytoplasmic portion of the chain corresponds to 553–1091 (TMDIVRSIQS…GRWDYKRMSQ (539 aa)). Residue D600 is the 4-aspartylphosphate intermediate of the active site. ATP-binding residues include D600, K601, T602, E724, F765, S767, K770, K788, R822, T823, T902, G903, D904, R1009, and K1015. D600 is a binding site for Mg(2+). Residue T602 participates in Mg(2+) binding. D1035 is a Mg(2+) binding site. ATP contacts are provided by N1038 and D1039. D1039 is a binding site for Mg(2+). The helical transmembrane segment at 1092–1112 (MISFFFYKNVIWTFILFWYQF) threads the bilayer. Residues 1113–1124 (YNEFDGNYIFDY) are Lumenal-facing. The chain crosses the membrane as a helical span at residues 1125–1145 (TYVMLFNLLFTSLPVIIAGCF). Residues 1146–1174 (DQDVDASVSMKNPSLYQRGILGLEWNGKR) lie on the Cytoplasmic side of the membrane. A helical transmembrane segment spans residues 1175-1197 (FWSYMLDGIYQSLVCFGVALFVF). Over 1198–1212 (KFGDFVSWTGRNIEC) the chain is Lumenal. Residues 1213–1233 (IEDIGLFISSPTIFVINIFIL) form a helical membrane-spanning segment. Topologically, residues 1234–1240 (MNQERLN) are cytoplasmic. Residues 1241–1261 (LISLITWMFSIGVFWIWTFIY) traverse the membrane as a helical segment. Residues 1262–1276 (SEVGPSYAFHKSASR) lie on the Lumenal side of the membrane. Residues 1277–1297 (TCQTFGFWCVTVLTIALCLLP) form a helical membrane-spanning segment. An a 1,2-diacyl-sn-glycero-3-phospho-L-serine-binding site is contributed by R1298. At 1298–1367 (RFSYICLQKL…TSVSFDDSNK (70 aa)) the chain is on the cytoplasmic side.

Belongs to the cation transport ATPase (P-type) (TC 3.A.3) family. Type IV subfamily. Mg(2+) serves as cofactor.

It localises to the cell membrane. Its subcellular location is the endoplasmic reticulum membrane. It carries out the reaction ATP + H2O + phospholipidSide 1 = ADP + phosphate + phospholipidSide 2.. The enzyme catalyses a 1,2-diacyl-sn-glycero-3-phosphoethanolamine(out) + ATP + H2O = a 1,2-diacyl-sn-glycero-3-phosphoethanolamine(in) + ADP + phosphate + H(+). It catalyses the reaction a 1,2-diacyl-sn-glycero-3-phosphocholine(out) + ATP + H2O = a 1,2-diacyl-sn-glycero-3-phosphocholine(in) + ADP + phosphate + H(+). The catalysed reaction is a beta-D-glucosyl-(1&lt;-&gt;1')-N-acylsphing-4-enine(out) + ATP + H2O = a beta-D-glucosyl-(1&lt;-&gt;1')-N-acylsphing-4-enine(in) + ADP + phosphate + H(+). It carries out the reaction a 1,2-diacyl-sn-glycero-3-phospho-L-serine(out) + ATP + H2O = a 1,2-diacyl-sn-glycero-3-phospho-L-serine(in) + ADP + phosphate + H(+). Catalytic component of a P4-ATPase flippase complex which catalyzes the hydrolysis of ATP coupled to the transport of glucosylceramide, phosphatidylcholine, phosphatidylethanolamine, and small amounts of phosphatidylserine from the lumenal to the cytosolic leaflet of the cell membrane and ensures the maintenance of asymmetric distribution of phospholipids. The sequence is that of Phospholipid-transporting ATPase C4F10.16c from Schizosaccharomyces pombe (strain 972 / ATCC 24843) (Fission yeast).